The chain runs to 404 residues: Argininosuccinate synthase (404 aa).

9–17 serves as a coordination point for ATP; the sequence is AYSGGLDTS. L-citrulline is bound at residue tyrosine 86. Glycine 116 provides a ligand contact to ATP. L-aspartate-binding residues include threonine 118, asparagine 122, and aspartate 123. L-citrulline is bound at residue asparagine 122. The L-citrulline site is built by arginine 126, serine 174, serine 183, glutamate 259, and tyrosine 271.

It belongs to the argininosuccinate synthase family. Type 1 subfamily. Homotetramer.

It localises to the cytoplasm. The catalysed reaction is L-citrulline + L-aspartate + ATP = 2-(N(omega)-L-arginino)succinate + AMP + diphosphate + H(+). It functions in the pathway amino-acid biosynthesis; L-arginine biosynthesis; L-arginine from L-ornithine and carbamoyl phosphate: step 2/3. This Listeria innocua serovar 6a (strain ATCC BAA-680 / CLIP 11262) protein is Argininosuccinate synthase.